The sequence spans 173 residues: Gamma-crystallin S-2 (173 aa).

Beta/gamma crystallin 'Greek key' domains are found at residues 2 to 40 (GKII…RVES) and 41 to 83 (DWWV…RVPT). A connecting peptide region spans residues 84–88 (HTQRP). 2 Beta/gamma crystallin 'Greek key' domains span residues 89-129 (YRMR…HVMG) and 130-172 (AYWI…RRIM).

Belongs to the beta/gamma-crystallin family.

Functionally, crystallins are the dominant structural components of the vertebrate eye lens. This chain is Gamma-crystallin S-2 (GS-2), found in Chiloscyllium indicum (Slender bamboo shark).